A 411-amino-acid chain; its full sequence is Probable 26S proteasome regulatory subunit rpn-6.2 (411 aa).

A PCI domain is found at 212–381; it reads YKTSFSYFYE…DTVVIYPKAG (170 aa).

Belongs to the proteasome subunit S9 family. Component of the lid subcomplex of the 19S proteasome regulatory particle complex (also named PA700 complex). The 26S proteasome consists of a 20S proteasome core and two 19S regulatory subunits.

Its function is as follows. Component of the lid subcomplex of the 26S proteasome, a multiprotein complex involved in the ATP-dependent degradation of ubiquitinated proteins. In the complex, rpn-6.2 is required for proteasome assembly. The sequence is that of Probable 26S proteasome regulatory subunit rpn-6.2 from Caenorhabditis briggsae.